The sequence spans 176 residues: Small ribosomal subunit protein uS5 (176 aa).

The region spanning 15–78 is the S5 DRBM domain; it reads FEERIVEIRR…SAARRNVFEV (64 aa).

The protein belongs to the universal ribosomal protein uS5 family. Part of the 30S ribosomal subunit. Contacts proteins S4 and S8.

With S4 and S12 plays an important role in translational accuracy. In terms of biological role, located at the back of the 30S subunit body where it stabilizes the conformation of the head with respect to the body. The sequence is that of Small ribosomal subunit protein uS5 from Thermosipho africanus (strain TCF52B).